A 461-amino-acid chain; its full sequence is Cysteine--tRNA ligase (461 aa).

A Zn(2+)-binding site is contributed by Cys-29. A 'HIGH' region motif is present at residues 31 to 41 (PTVYNYAHIGN). Residues Cys-214, His-239, and Glu-243 each coordinate Zn(2+). Positions 271 to 275 (KMSKS) match the 'KMSKS' region motif. Position 274 (Lys-274) interacts with ATP.

This sequence belongs to the class-I aminoacyl-tRNA synthetase family. In terms of assembly, monomer. Zn(2+) serves as cofactor.

The protein localises to the cytoplasm. The catalysed reaction is tRNA(Cys) + L-cysteine + ATP = L-cysteinyl-tRNA(Cys) + AMP + diphosphate. The sequence is that of Cysteine--tRNA ligase from Hyphomonas neptunium (strain ATCC 15444).